We begin with the raw amino-acid sequence, 342 residues long: Protein-glutamate methylesterase/protein-glutamine glutaminase 1 (342 aa).

Residues 3-121 (RVLVIDDSLF…NIREIGGELK (119 aa)) form the Response regulatory domain. Position 54 is a 4-aspartylphosphate (aspartate 54). The CheB-type methylesterase domain occupies 141–340 (DSNARNVVLI…EKIVETIRAM (200 aa)). Catalysis depends on residues serine 153, histidine 180, and aspartate 282.

This sequence belongs to the CheB family. Phosphorylated by CheA. Phosphorylation of the N-terminal regulatory domain activates the methylesterase activity.

The protein resides in the cytoplasm. It catalyses the reaction [protein]-L-glutamate 5-O-methyl ester + H2O = L-glutamyl-[protein] + methanol + H(+). The enzyme catalyses L-glutaminyl-[protein] + H2O = L-glutamyl-[protein] + NH4(+). In terms of biological role, involved in chemotaxis. Part of a chemotaxis signal transduction system that modulates chemotaxis in response to various stimuli. Catalyzes the demethylation of specific methylglutamate residues introduced into the chemoreceptors (methyl-accepting chemotaxis proteins or MCP) by CheR. Also mediates the irreversible deamidation of specific glutamine residues to glutamic acid. This Methanospirillum hungatei JF-1 (strain ATCC 27890 / DSM 864 / NBRC 100397 / JF-1) protein is Protein-glutamate methylesterase/protein-glutamine glutaminase 1.